The following is a 106-amino-acid chain: Immunoglobulin lambda constant 3 (106 aa).

In terms of domain architecture, Ig-like spans 7 to 101 (PSVTLFPPSS…EGSTVEKTVA (95 aa)). A disulfide bond links cysteine 28 and cysteine 87.

Immunoglobulins are composed of two identical heavy chains and two identical light chains; disulfide-linked.

Its subcellular location is the secreted. The protein resides in the cell membrane. Constant region of immunoglobulin light chains. Immunoglobulins, also known as antibodies, are membrane-bound or secreted glycoproteins produced by B lymphocytes. In the recognition phase of humoral immunity, the membrane-bound immunoglobulins serve as receptors which, upon binding of a specific antigen, trigger the clonal expansion and differentiation of B lymphocytes into immunoglobulins-secreting plasma cells. Secreted immunoglobulins mediate the effector phase of humoral immunity, which results in the elimination of bound antigens. The antigen binding site is formed by the variable domain of one heavy chain, together with that of its associated light chain. Thus, each immunoglobulin has two antigen binding sites with remarkable affinity for a particular antigen. The variable domains are assembled by a process called V-(D)-J rearrangement and can then be subjected to somatic hypermutations which, after exposure to antigen and selection, allow affinity maturation for a particular antigen. This Homo sapiens (Human) protein is Immunoglobulin lambda constant 3.